We begin with the raw amino-acid sequence, 636 residues long: Chaperone protein DnaK (636 aa).

Threonine 203 is subject to Phosphothreonine; by autocatalysis. Residues 602–636 form a disordered region; that stretch reads VYGKQQEGAPAQEEPSAEGKKADDEGTVEGEFREV. Over residues 618-636 the composition is skewed to basic and acidic residues; sequence AEGKKADDEGTVEGEFREV.

Belongs to the heat shock protein 70 family.

In terms of biological role, acts as a chaperone. The polypeptide is Chaperone protein DnaK (Dehalococcoides mccartyi (strain CBDB1)).